A 437-amino-acid chain; its full sequence is Trigger factor (437 aa).

Residues 165-251 (GDLVVIDFKG…LHTIKEKEKI (87 aa)) enclose the PPIase FKBP-type domain.

Belongs to the FKBP-type PPIase family. Tig subfamily.

It is found in the cytoplasm. It catalyses the reaction [protein]-peptidylproline (omega=180) = [protein]-peptidylproline (omega=0). Functionally, involved in protein export. Acts as a chaperone by maintaining the newly synthesized protein in an open conformation. Functions as a peptidyl-prolyl cis-trans isomerase. The chain is Trigger factor from Nitratiruptor sp. (strain SB155-2).